Reading from the N-terminus, the 1002-residue chain is TOG array regulator of axonemal microtubules protein 2 (1002 aa).

Disordered regions lie at residues 54–74, 131–214, 332–351, 402–421, and 426–450; these read SSVLPSSEKPSQLSREHEDQS, KRRL…SAQE, ETRSLENEEDQKESSTKVQV, PLRGSGALSEPAGMSSPRRN, and LQRKRANRASLPSIPVSKQEPGFAR.

It belongs to the Crescerin family.

This is TOG array regulator of axonemal microtubules protein 2 (Togaram2) from Mus musculus (Mouse).